Here is a 69-residue protein sequence, read N- to C-terminus: MKQGLHPEYHHDAVVKCACGNTFTTGSTNAELKVDVCSKCHPFYTGKQKILDTGGRIEKFMKKYNLNQK.

Zn(2+) is bound by residues Cys-17, Cys-19, Cys-37, and Cys-40.

Belongs to the bacterial ribosomal protein bL31 family. Type A subfamily. In terms of assembly, part of the 50S ribosomal subunit. The cofactor is Zn(2+).

Functionally, binds the 23S rRNA. The polypeptide is Large ribosomal subunit protein bL31 (Clostridium novyi (strain NT)).